We begin with the raw amino-acid sequence, 787 residues long: tRNA ligase 1 (787 aa).

The active-site N6-AMP-lysine intermediate is the lysine 117.

It belongs to the TRL1 family.

It is found in the cytoplasm. It catalyses the reaction ATP + (ribonucleotide)n-3'-hydroxyl + 5'-phospho-(ribonucleotide)m = (ribonucleotide)n+m + AMP + diphosphate.. In terms of biological role, required for the splicing of precursor tRNA molecules containing introns. The ligation activity requires three enzymatic activities: phosphorylation of the 5' terminus of the 3' half-tRNA in the presence of ATP, opening of the 2'3'-cyclic phosphodiester bond of the 5' half-tRNA leaving a 2'-phosphomonoester and ligation of the two tRNA halves in an ATP-dependent reaction. The chain is tRNA ligase 1 (trl1) from Schizosaccharomyces pombe (strain 972 / ATCC 24843) (Fission yeast).